The sequence spans 250 residues: Heat stress transcription factor C-1b (250 aa).

The stretch at 129 to 182 forms a coiled coil; sequence EEGEEVRGTIEAVQRLREEQRGMEEELQAMDQRLRAAESRPGQMMAFLAKLADE. Residues 144 to 180 form a hydrophobic repeat HR-A/B region; the sequence is LREEQRGMEEELQAMDQRLRAAESRPGQMMAFLAKLA. The disordered stretch occupies residues 199 to 226; the sequence is AAGNNGSDPCKRRRIGADTGRGGVATGG. The Nuclear localization signal motif lies at 209-212; it reads KRRR.

Belongs to the HSF family. Class C subfamily. As to quaternary structure, homotrimer. Exhibits temperature-dependent phosphorylation.

It localises to the nucleus. Its function is as follows. Transcriptional regulator that specifically binds DNA of heat shock promoter elements (HSE). This Oryza sativa subsp. japonica (Rice) protein is Heat stress transcription factor C-1b (HSFC1B).